The primary structure comprises 417 residues: Phosphoglycerate kinase, cytosolic (417 aa).

Positions 23, 24, 25, 26, 39, 61, 62, 64, 65, 132, 168, and 169 each coordinate (2R)-3-phosphoglycerate. ADP-binding residues include Gly-214 and Ala-215. Gly-214 is a CDP binding site. AMP contacts are provided by Ala-215 and Lys-216. Ala-215 lines the ATP pocket. Residue Ala-215 coordinates Mg(2+). Lys-216 is a (2R)-3-phosphoglycerate binding site. Asp-219 serves as a coordination point for CDP. Asp-219 serves as a coordination point for Mg(2+). 2 residues coordinate ADP: Lys-220 and Gly-238. Residue Lys-220 coordinates AMP. Lys-220 contacts ATP. Gly-238 lines the CDP pocket. Residues Ala-239 and Ala-311 each coordinate AMP. ATP-binding residues include Ala-239 and Ala-311. ADP contacts are provided by Ala-311 and Asn-335. CDP is bound by residues Gly-336 and Phe-341. ADP contacts are provided by Phe-341, Glu-342, Asp-374, and Thr-375. Residue Glu-342 coordinates AMP. Residues Glu-342, Asp-374, and Thr-375 each coordinate ATP. A Mg(2+)-binding site is contributed by Asp-374.

Belongs to the phosphoglycerate kinase family. In terms of assembly, monomer. The cofactor is Mg(2+).

The protein localises to the cytoplasm. It carries out the reaction (2R)-3-phosphoglycerate + ATP = (2R)-3-phospho-glyceroyl phosphate + ADP. The protein operates within carbohydrate degradation; glycolysis; pyruvate from D-glyceraldehyde 3-phosphate: step 2/5. This is Phosphoglycerate kinase, cytosolic (PGKB) from Leishmania mexicana.